The following is a 228-amino-acid chain: Thrombin-like enzyme gyroxin analog (228 aa).

Positions 1-222 constitute a Peptidase S1 domain; the sequence is VIGGDECNIN…YLDWIQSVIA (222 aa). Intrachain disulfides connect Cys7-Cys138, Cys28-Cys44, Cys78-Cys227, Cys117-Cys183, Cys149-Cys162, and Cys173-Cys198. The active-site Charge relay system is His43. Asn45 and Asn81 each carry an N-linked (GlcNAc...) asparagine glycan. Asp88 functions as the Charge relay system in the catalytic mechanism. An N-linked (GlcNAc...) asparagine glycan is attached at Asn145. The active-site Charge relay system is the Ser177. Asn224 carries an N-linked (GlcNAc...) asparagine glycan.

This sequence belongs to the peptidase S1 family. Snake venom subfamily. As to quaternary structure, monomer. Expressed by the venom gland.

It localises to the secreted. The catalysed reaction is Selective cleavage of Arg-|-Xaa bond in fibrinogen, to form fibrin, and release fibrinopeptide A. The specificity of further degradation of fibrinogen varies with species origin of the enzyme.. Its activity is regulated as follows. Inhibited competitively by amidines and guanidines, and irreversibly inhibited by diisopropylfluorophosphate. Functionally, thrombin-like snake venom serine protease, that cleaves alpha-chain of fibrinogen (FGA) releases only fibrinopeptide A. Shows coagulant, esterase and amidase activities. Induces the barrel rotation syndrome in mice, which is manifested by gyroxin-like, rapid rolling motions. May also reversibly increase the permeability of the blood brain barrier (BBB) in mice. The polypeptide is Thrombin-like enzyme gyroxin analog (Lachesis muta muta (Bushmaster)).